A 228-amino-acid chain; its full sequence is Triosephosphate isomerase (228 aa).

12 to 14 (NFK) serves as a coordination point for substrate. The Electrophile role is filled by histidine 96. Residue glutamate 144 is the Proton acceptor of the active site. Substrate-binding positions include isoleucine 149, glycine 184, and 205-206 (AS).

The protein belongs to the triosephosphate isomerase family. As to quaternary structure, homotetramer; dimer of dimers.

Its subcellular location is the cytoplasm. The catalysed reaction is D-glyceraldehyde 3-phosphate = dihydroxyacetone phosphate. It functions in the pathway carbohydrate biosynthesis; gluconeogenesis. It participates in carbohydrate degradation; glycolysis; D-glyceraldehyde 3-phosphate from glycerone phosphate: step 1/1. Its function is as follows. Involved in the gluconeogenesis. Catalyzes stereospecifically the conversion of dihydroxyacetone phosphate (DHAP) to D-glyceraldehyde-3-phosphate (G3P). The polypeptide is Triosephosphate isomerase (Pyrococcus furiosus (strain ATCC 43587 / DSM 3638 / JCM 8422 / Vc1)).